A 306-amino-acid chain; its full sequence is Tyrosine--tRNA ligase (306 aa).

L-tyrosine contacts are provided by Tyr32 and Glu36. Positions Pro37–His45 match the 'HIGH' region motif. The tract at residues Tyr151 to Asp158 is tyrosine. Residue Gln173 participates in L-tyrosine binding. Residues Lys204–Ser208 carry the 'KMSKS' region motif. ATP is bound at residue Ser207. Interaction with t-RNA stretches follow at residues Lys228–Cys231 and His283–Lys288.

The protein belongs to the class-I aminoacyl-tRNA synthetase family. TyrS type 3 subfamily. Homodimer.

Its subcellular location is the cytoplasm. The catalysed reaction is tRNA(Tyr) + L-tyrosine + ATP = L-tyrosyl-tRNA(Tyr) + AMP + diphosphate + H(+). Functionally, catalyzes the attachment of tyrosine to tRNA(Tyr) in a two-step reaction: tyrosine is first activated by ATP to form Tyr-AMP and then transferred to the acceptor end of tRNA(Tyr). This Methanocaldococcus jannaschii (strain ATCC 43067 / DSM 2661 / JAL-1 / JCM 10045 / NBRC 100440) (Methanococcus jannaschii) protein is Tyrosine--tRNA ligase (tyrS).